A 188-amino-acid polypeptide reads, in one-letter code: Elongation factor P (188 aa).

This sequence belongs to the elongation factor P family.

Its subcellular location is the cytoplasm. It functions in the pathway protein biosynthesis; polypeptide chain elongation. In terms of biological role, involved in peptide bond synthesis. Stimulates efficient translation and peptide-bond synthesis on native or reconstituted 70S ribosomes in vitro. Probably functions indirectly by altering the affinity of the ribosome for aminoacyl-tRNA, thus increasing their reactivity as acceptors for peptidyl transferase. In Chlorobium limicola (strain DSM 245 / NBRC 103803 / 6330), this protein is Elongation factor P.